The following is a 366-amino-acid chain: Transcription factor MYB28 (366 aa).

2 HTH myb-type domains span residues 9–61 and 62–116; these read GEGL…TNYL and KPEI…KKRL. DNA-binding regions (H-T-H motif) lie at residues 37 to 61 and 89 to 112; these read WRDI…TNYL and WSVI…NTHL. The disordered stretch occupies residues 124–170; the sequence is VTHKPLASSSNPTVDENLNSPNASSSDKQYSRSSSMPFLSRPPPSSC. The span at 130 to 146 shows a compositional bias: polar residues; it reads ASSSNPTVDENLNSPNA. Residues 147 to 158 show a composition bias toward low complexity; the sequence is SSSDKQYSRSSS.

Can form complexes with MYC2, MYC3 or MYC4. In terms of tissue distribution, expressed in generative organs, mature leaves and trichomes.

The protein resides in the nucleus. In terms of biological role, major regulator of short-chained aliphatic glucosinolates (GLSs) biosynthesis. Together with MYB29/HAG3 and MYB76/HAG2, promotes aliphatic glucosinolate biosynthesis but represses indolic glucosinolate biosynthesis. Prevents insect performance (e.g. lepidopteran insect Mamestra brassicae and Spodoptera exigua) by promoting glucosinolates. The chain is Transcription factor MYB28 (MYB28) from Arabidopsis thaliana (Mouse-ear cress).